The primary structure comprises 97 residues: Small cell adhesion glycoprotein (97 aa).

The Extracellular portion of the chain corresponds to 1-36 (MNNLPATPSPEELMTTPVFQAPETLSPQAEEASTAL). T7 is a glycosylation site (O-linked (GalNAc...) threonine). An O-linked (GalNAc...) serine glycan is attached at S9. T15, T16, and T24 each carry an O-linked (GalNAc...) threonine glycan. The O-linked (GalNAc...) serine glycan is linked to S26. A helical; Signal-anchor for type III membrane protein transmembrane segment spans residues 37 to 57 (IAVVITVVFLTLLSVVTLIFF). At 58-97 (HLYKNKGSYVTYEPAEGEPSAILQMETDSAKGREKEEYFI) the chain is on the cytoplasmic side.

The protein belongs to the SMAGP family. Post-translationally, O-glycosylated. The O-glycan is modified with sialic acid residues.

It is found in the cell membrane. It localises to the cytoplasmic vesicle membrane. In terms of biological role, may play a role in epithelial cell-cell contacts. May play a role in tumor invasiveness and metastasis formation. This is Small cell adhesion glycoprotein (Smagp) from Mus musculus (Mouse).